Consider the following 606-residue polypeptide: MNMFSSLSLVTLLLLTMPIMMMSLNTYKPSNYPLYVKTAISYAFITSMIPTMMFIHSGQELIISNWHWLTIQTLKLSLSFKMDYFSMMFTPVALFVTWSIMEFSMWYMHSDPNINKFFKYLLLFLITMLILVTANNLFQLFIGWEGVGIMSFLLIGWWYGRADANTAALQAVLYNRIGDIGFILAMAWFLTNLNTWDLQQIFMLNPSDSNMPLIGLALAATGKSAQFGLHPWLPSAMEGPTPVSALLHSSTMVVAGIFLLIRFYPLTENNKFIQSITLCLGAITTLFTAMCALTQNDIKKIIAFSTSSQLGLMMVTIGINQPYLAFLHICTHAFFKAMLFMCSGSIIHSLNDEQDIRKMGGLFKAMPFTTTALIVGSLALTGMPFLTGFYSKDLIIEAANTSYTNAWALLMTLIATSFTAIYSTRIIFFALLGQPRFPTLVSINENNPLLINSIKRLLIGSLFAGYIISNNIPPTTIPQMTMPYYLKTTALIVTILGFILALEISNMTKNLKYHYPSNAFKFSTLLGYFPTIMHRLAPYMNLSMSQKSASSLLDLIWLEAILPKTISLAQMKASTLVTNQKGLIKLYFLSFLITILISMMLFNFHE.

15 consecutive transmembrane segments (helical) span residues 4 to 24, 43 to 63, 87 to 107, 117 to 137, 140 to 160, 171 to 191, 213 to 233, 241 to 261, 272 to 292, 310 to 330, 366 to 386, 413 to 433, 457 to 477, 482 to 502, and 582 to 602; these read FSSL…MMSL, AFIT…ELII, MMFT…SMWY, FFKY…ANNL, LFIG…WWYG, AVLY…WFLT, LIGL…HPWL, TPVS…FLLI, FIQS…AMCA, LGLM…LHIC, MPFT…MPFL, LIAT…ALLG, LLIG…PTTI, MPYY…ILAL, and GLIK…MMLF.

Core subunit of respiratory chain NADH dehydrogenase (Complex I) which is composed of 45 different subunits.

The protein resides in the mitochondrion inner membrane. The catalysed reaction is a ubiquinone + NADH + 5 H(+)(in) = a ubiquinol + NAD(+) + 4 H(+)(out). In terms of biological role, core subunit of the mitochondrial membrane respiratory chain NADH dehydrogenase (Complex I) which catalyzes electron transfer from NADH through the respiratory chain, using ubiquinone as an electron acceptor. Essential for the catalytic activity and assembly of complex I. The polypeptide is NADH-ubiquinone oxidoreductase chain 5 (MT-ND5) (Bos indicus (Zebu)).